The primary structure comprises 31 residues: Ice-structuring glycoprotein 3 (31 aa).

O-linked (GalNAc...) threonine glycans are attached at residues Thr-3, Thr-6, Thr-9, Thr-12, Thr-15, Thr-18, Thr-21, Thr-24, Thr-27, and Thr-30.

O-linked glycans consist of Gal-GalNAc disaccharides. The three proteins may differ only in the number of repeating units of -Ala-Ala-Thr-.

The protein localises to the secreted. Its function is as follows. Antifreeze proteins lower the blood freezing point. This fish lives in antarctic waters where it experiences water temperatures near -1.9 degrees Celsius. Its blood has a freezing point of about -2.0 degrees Celsius, and 30% of the freezing-point depression is due mainly to the 3 major high molecular weight glycoproteins in the plasma. The polypeptide is Ice-structuring glycoprotein 3 (Pagothenia borchgrevinki (Bald rockcod)).